We begin with the raw amino-acid sequence, 367 residues long: Dual specificity protein phosphatase 1 (367 aa).

One can recognise a Rhodanese domain in the interval 20–137 (GAAQCLLLDC…FSASCPELCS (118 aa)). The 142-residue stretch at 173-314 (GPVEILSFLY…LLQFESQVLA (142 aa)) folds into the Tyrosine-protein phosphatase domain. The active-site Phosphocysteine intermediate is C258. A phosphoserine; by MAPK1 and MAPK3 mark is found at S359 and S364.

It belongs to the protein-tyrosine phosphatase family. Non-receptor class dual specificity subfamily. In terms of processing, phosphorylation at Ser-359 and Ser-364 by MAPK1/ERK2 and MAPK3/ERK1 reduces its rate of degradation. Post-translationally, 'Lys-48'-linked polyubiquitinated by NEURL3, leading to proteasomal degradation.

The protein resides in the nucleus. It carries out the reaction O-phospho-L-tyrosyl-[protein] + H2O = L-tyrosyl-[protein] + phosphate. It catalyses the reaction O-phospho-L-seryl-[protein] + H2O = L-seryl-[protein] + phosphate. The enzyme catalyses O-phospho-L-threonyl-[protein] + H2O = L-threonyl-[protein] + phosphate. In terms of biological role, dual specificity phosphatase that dephosphorylates MAP kinase MAPK1/ERK2 on both 'Thr-183' and 'Tyr-185', regulating its activity during the meiotic cell cycle. This chain is Dual specificity protein phosphatase 1, found in Mus musculus (Mouse).